The following is a 706-amino-acid chain: Fatty acid oxidation complex subunit alpha (706 aa).

Residues 1 to 188 form an enoyl-CoA hydratase region; that stretch reads MEKTFNLTRR…KMGLVNDVVP (188 aa). Residues 308-706 form a 3-hydroxyacyl-CoA dehydrogenase region; sequence RKVKKAVILG…TMAQENAHFF (399 aa).

In the N-terminal section; belongs to the enoyl-CoA hydratase/isomerase family. This sequence in the central section; belongs to the 3-hydroxyacyl-CoA dehydrogenase family. In terms of assembly, heterotetramer of two alpha chains (FadJ) and two beta chains (FadI).

The protein localises to the cytoplasm. The enzyme catalyses a (3S)-3-hydroxyacyl-CoA = a (2E)-enoyl-CoA + H2O. It carries out the reaction a 4-saturated-(3S)-3-hydroxyacyl-CoA = a (3E)-enoyl-CoA + H2O. It catalyses the reaction a (3S)-3-hydroxyacyl-CoA + NAD(+) = a 3-oxoacyl-CoA + NADH + H(+). The catalysed reaction is (3S)-3-hydroxybutanoyl-CoA = (3R)-3-hydroxybutanoyl-CoA. It functions in the pathway lipid metabolism; fatty acid beta-oxidation. Its function is as follows. Catalyzes the formation of a hydroxyacyl-CoA by addition of water on enoyl-CoA. Also exhibits 3-hydroxyacyl-CoA epimerase and 3-hydroxyacyl-CoA dehydrogenase activities. In Shewanella baltica (strain OS155 / ATCC BAA-1091), this protein is Fatty acid oxidation complex subunit alpha.